Here is a 94-residue protein sequence, read N- to C-terminus: Late cornified envelope protein 3C (94 aa).

The span at 1 to 10 shows a compositional bias: low complexity; sequence MSCQQNQQQC. 2 disordered regions span residues 1–35 and 65–94; these read MSCQQNQQQCQPPPSCPSPKCPPKSPAQCLPPPSS and CRRQRSNSCDRGSGQQGGGSCRGHGSGGCC. Over residues 11 to 34 the composition is skewed to pro residues; the sequence is QPPPSCPSPKCPPKSPAQCLPPPS. The span at 78–94 shows a compositional bias: gly residues; the sequence is GQQGGGSCRGHGSGGCC.

The protein belongs to the LCE family. As to quaternary structure, interacts with CYSRT1; the interaction is direct. As to expression, skin-specific. Expression was readily detected in adult trunk skin, adult arm skin, fetal skin, penal skin, vulva, esophagus and tongue. Not expressed in the cervix, rectum, lung, colon, or placenta.

Its function is as follows. A structural component of the cornified envelope of the stratum corneum involved in innate cutaneous host defense. Possesses defensin-like antimicrobial activity against a broad spectrum of Gram-positive and Gram-negative bacteria, both aerobic and anaerobic species. Upon inflammation, may regulate skin barrier repair by shaping cutaneous microbiota composition and immune response to bacterial antigens. This is Late cornified envelope protein 3C from Homo sapiens (Human).